Reading from the N-terminus, the 126-residue chain is Pancreatic polypeptide prohormone (126 aa).

The signal sequence occupies residues 1-26 (MTATRCCLWLLLLGTCMALLLPEAWG). Tyr-62 is subject to Tyrosine amide. The interval 77 to 126 (RQSHAAAPGGSHRHPPAGLPAAKGGTGVSGSPPKPWDCLPCRAHSLPSQS) is disordered.

It belongs to the NPY family. No icosapeptide-like peptide is cleaved from the C-terminal.

The protein resides in the secreted. Hormone secreted by pancreatic cells that acts as a regulator of pancreatic and gastrointestinal functions probably by signaling through the G protein-coupled receptor NPY4R2. In Cavia porcellus (Guinea pig), this protein is Pancreatic polypeptide prohormone (PPY).